The primary structure comprises 220 residues: UPF0319 protein YccT (220 aa).

The N-terminal stretch at 1–20 is a signal peptide; sequence MKTGALATFLALCLPVTVFA.

This sequence belongs to the UPF0319 family.

In Salmonella enteritidis PT4 (strain P125109), this protein is UPF0319 protein YccT.